The primary structure comprises 124 residues: uncharacterized protein (124 aa).

This is an uncharacterized protein from Saccharomyces cerevisiae (strain ATCC 204508 / S288c) (Baker's yeast).